A 571-amino-acid chain; its full sequence is Sialate:O-sulfotransferase 2 (571 aa).

Residues 1–20 (MAKLWFKFQRCFRYFRRKPV) are Cytoplasmic-facing. A helical membrane pass occupies residues 21–43 (RFFTLLAIYLTAGSLVFLHSGFV). At 44 to 571 (GQPAVPQSQA…TGVPDAYGPR (528 aa)) the chain is on the extracellular side. WSC domains lie at 133–225 (KAKY…YRLQ) and 236–330 (SAVF…YQTQ). Asn195 and Asn248 each carry an N-linked (GlcNAc...) asparagine glycan.

The protein belongs to the WSCD family.

The protein localises to the golgi apparatus membrane. Its function is as follows. Sialate:O-sulfotransferase that catalyzes 8-O-sulfation at the Sia-glycan level using 3'-phosphoadenosine 5'-phosphosulfate (PAPS) as a donor, forming 8-O-sulfated Sia (Sia8S)-glycans. Displays selectivity toward glycoproteins such as TF/transferrin. The polypeptide is Sialate:O-sulfotransferase 2 (Wscd2) (Mus musculus (Mouse)).